Reading from the N-terminus, the 568-residue chain is O-fucosyltransferase 9 (568 aa).

Residues 1–19 show a composition bias toward low complexity; it reads MHGLSRLGNGSSNGRINIP. Positions 1–33 are disordered; the sequence is MHGLSRLGNGSSNGRINIPSPSPPSSPRIRHTR. Residues 65-85 form a helical; Signal-anchor for type II membrane protein membrane-spanning segment; that stretch reads LLLAPLLYIAGMLLFMGSFGF. Residues N125, N151, N189, and N243 are each glycosylated (N-linked (GlcNAc...) asparagine). 336-338 is a substrate binding site; sequence HLR. N-linked (GlcNAc...) asparagine glycosylation is found at N408 and N409.

The protein belongs to the glycosyltransferase GT106 family.

Its subcellular location is the membrane. The protein operates within glycan metabolism. The polypeptide is O-fucosyltransferase 9 (Arabidopsis thaliana (Mouse-ear cress)).